A 118-amino-acid chain; its full sequence is Small ribosomal subunit protein uS13 (118 aa).

The disordered stretch occupies residues H91 to K118.

The protein belongs to the universal ribosomal protein uS13 family. In terms of assembly, part of the 30S ribosomal subunit. Forms a loose heterodimer with protein S19. Forms two bridges to the 50S subunit in the 70S ribosome.

In terms of biological role, located at the top of the head of the 30S subunit, it contacts several helices of the 16S rRNA. In the 70S ribosome it contacts the 23S rRNA (bridge B1a) and protein L5 of the 50S subunit (bridge B1b), connecting the 2 subunits; these bridges are implicated in subunit movement. Contacts the tRNAs in the A and P-sites. The polypeptide is Small ribosomal subunit protein uS13 (Marinomonas sp. (strain MWYL1)).